Consider the following 274-residue polypeptide: Formamidopyrimidine-DNA glycosylase (274 aa).

The active-site Schiff-base intermediate with DNA is P2. Residue E3 is the Proton donor of the active site. Catalysis depends on K58, which acts as the Proton donor; for beta-elimination activity. 2 residues coordinate DNA: H91 and R110. An FPG-type zinc finger spans residues 238–272 (QVYDKTGQECVRCGTIIEKIQLGGRGTHFCPNCQR). Catalysis depends on R262, which acts as the Proton donor; for delta-elimination activity.

Belongs to the FPG family. Monomer. Requires Zn(2+) as cofactor.

It carries out the reaction Hydrolysis of DNA containing ring-opened 7-methylguanine residues, releasing 2,6-diamino-4-hydroxy-5-(N-methyl)formamidopyrimidine.. The enzyme catalyses 2'-deoxyribonucleotide-(2'-deoxyribose 5'-phosphate)-2'-deoxyribonucleotide-DNA = a 3'-end 2'-deoxyribonucleotide-(2,3-dehydro-2,3-deoxyribose 5'-phosphate)-DNA + a 5'-end 5'-phospho-2'-deoxyribonucleoside-DNA + H(+). In terms of biological role, involved in base excision repair of DNA damaged by oxidation or by mutagenic agents. Acts as a DNA glycosylase that recognizes and removes damaged bases. Has a preference for oxidized purines, such as 7,8-dihydro-8-oxoguanine (8-oxoG). Has AP (apurinic/apyrimidinic) lyase activity and introduces nicks in the DNA strand. Cleaves the DNA backbone by beta-delta elimination to generate a single-strand break at the site of the removed base with both 3'- and 5'-phosphates. The sequence is that of Formamidopyrimidine-DNA glycosylase from Streptococcus pneumoniae (strain ATCC BAA-255 / R6).